The chain runs to 206 residues: LexA repressor (206 aa).

The H-T-H motif DNA-binding region spans V28 to S48. Catalysis depends on for autocatalytic cleavage activity residues S128 and K166.

This sequence belongs to the peptidase S24 family. Homodimer.

It carries out the reaction Hydrolysis of Ala-|-Gly bond in repressor LexA.. Represses a number of genes involved in the response to DNA damage (SOS response), including recA and lexA. In the presence of single-stranded DNA, RecA interacts with LexA causing an autocatalytic cleavage which disrupts the DNA-binding part of LexA, leading to derepression of the SOS regulon and eventually DNA repair. In Bacillus cytotoxicus (strain DSM 22905 / CIP 110041 / 391-98 / NVH 391-98), this protein is LexA repressor.